The primary structure comprises 355 residues: Cyclic nucleotide-gated potassium channel RHE_CH03180 (355 aa).

At 1 to 12 the chain is on the cytoplasmic side; it reads MSAVPFSKISTP. Residues 13-30 form a helical membrane-spanning segment; the sequence is LNALFATIGLLVVAALTT. Residues 31-38 lie on the Periplasmic side of the membrane; it reads QGLTGQER. A helical membrane pass occupies residues 39-61; that stretch reads LVFELLLAAIWLAYVLQLSGTLL. The Cytoplasmic portion of the chain corresponds to 62-73; the sequence is SRRRRLSGEMTA. Residues 74–93 form a helical membrane-spanning segment; sequence LVIDLLAVLVPAAAFLFVGS. A helical membrane pass occupies residues 94 to 111; sequence RDRDLYCAIWLLKPLRDS. At 112 to 128 the chain is on the cytoplasmic side; that stretch reads TFFRLLAKVVANESRNL. Residues 129–149 form a helical membrane-spanning segment; it reads LGVTSVFGIVLFGAALAGYII. Residues 150–160 lie on the Periplasmic side of the membrane; the sequence is ERDVQPDKFGS. The pore-forming intramembrane region spans 161–179; that stretch reads IPQAMWWAVVTLSTTGYGD. Positions 174-179 match the Selectivity filter motif; the sequence is TTGYGD. The Periplasmic portion of the chain corresponds to 180–184; sequence EIPQS. A helical membrane pass occupies residues 185–209; it reads LAGRVLAGLVMMSGIGIFALWAGIL. Residues 210 to 355 lie on the Cytoplasmic side of the membrane; sequence ATGFYEEVRR…LERRGGPPKE (146 aa). Residues 297-298, 307-308, and R348 contribute to the 3',5'-cyclic AMP site; these read GE and RS.

This sequence belongs to the potassium channel family. In terms of assembly, homotetramer.

It is found in the cell membrane. Functionally, cyclic nucleotide-regulated potassium channel activated by cAMP. This chain is Cyclic nucleotide-gated potassium channel RHE_CH03180, found in Rhizobium etli (strain ATCC 51251 / DSM 11541 / JCM 21823 / NBRC 15573 / CFN 42).